A 200-amino-acid chain; its full sequence is uncharacterized protein (200 aa).

The disordered stretch occupies residues 1-21 (MSNSAQRDARNSRDESARASD). Positions 7 to 21 (RDARNSRDESARASD) are enriched in basic and acidic residues.

This is an uncharacterized protein from Mycobacterium tuberculosis (strain ATCC 25618 / H37Rv).